Here is a 177-residue protein sequence, read N- to C-terminus: Ecotin (177 aa).

Positions 1–23 are cleaved as a signal peptide; that stretch reads MQASIQNRIFFGLVVLWSTTVLE. Residues cysteine 83 and cysteine 122 are joined by a disulfide bond.

The protein belongs to the protease inhibitor I11 (ecotin) family. In terms of assembly, homodimer.

The protein resides in the periplasm. General inhibitor of family S1 serine proteases. In Prochlorococcus marinus (strain MIT 9313), this protein is Ecotin.